The chain runs to 474 residues: Dol-P-Glc:Glc(2)Man(9)GlcNAc(2)-PP-Dol alpha-1,2-glucosyltransferase (474 aa).

Over 1–6 (MAQLEG) the chain is Cytoplasmic. Residues 7–27 (YYFSAALSCTFLVSCLLFSAF) traverse the membrane as a helical segment. The Extracellular segment spans residues 28–64 (SRALREPYMDEIFHLPQAQRYCEGRFSLSQWDPMITT). A helical transmembrane segment spans residues 65–85 (LPGLYLVSVGVVKPASWLLGW). Residues 86–97 (SEHVICSIGVLR) lie on the Cytoplasmic side of the membrane. A helical membrane pass occupies residues 98-118 (FVNLLFSVGNFYLLYLLFRKV). At 119–126 (QPRNKASS) the chain is on the extracellular side. The helical transmembrane segment at 127–147 (SIQRILSTLTLAVFPTLYFFN) threads the bilayer. Over 148–150 (FLY) the chain is Cytoplasmic. The chain crosses the membrane as a helical span at residues 151–171 (YTEAGSVFFTLFAYLMCLYGN). Residues 172-175 (HRTS) lie on the Extracellular side of the membrane. A helical membrane pass occupies residues 176 to 196 (ALLGFCGFMFRQTNIIWAAFC). At 197 to 256 (AGHLIAQKCSEAWKIELQKKKEERLAPTKGPLSELRRVLQFLLVYAMSLKNLRMLFLLTW) the chain is on the cytoplasmic side. A helical membrane pass occupies residues 257-277 (PYVLLLLAFFAFVVVNGGIVV). At 278–283 (GDRSSH) the chain is on the extracellular side. Residues 284-304 (EACLHFPQLFYFFSFTAFFSF) form a helical membrane-spanning segment. At 305 to 317 (PHLLSLTKVKTFL) the chain is on the cytoplasmic side. Residues 318–338 (SLVWKRRVQFSVVTLVSILLV) traverse the membrane as a helical segment. The Extracellular portion of the chain corresponds to 339–365 (WKFTYVHKYLLADNRHYTFYVWKRVFQ). Residues 366–386 (RHEVVKYLLVPAYIFAGWAIA) traverse the membrane as a helical segment. Over 387–392 (DSLKAK) the chain is Cytoplasmic. Residues 393–413 (SIFWNLMFFVCLVASTVPQKL) traverse the membrane as a helical segment. Residues 414–436 (LEFRYFILPYIIYRLNIPLPPIS) lie on the Extracellular side of the membrane. A helical transmembrane segment spans residues 437–457 (RLVCELGCYTVVNFVTFYIFL). At 458-473 (NKTFQWPNSQDIQRFM) the chain is on the cytoplasmic side.

The protein belongs to the ALG10 glucosyltransferase family. In terms of assembly, interacts with KCNH1; may regulate KCNH1, possibly by regulating its N-glycosylation. Interacts with KCNH2; may reduce KCNH2 sensitivity to classic proarrhythmic drug blockade, possibly by regulating its N-glycosylation.

It is found in the endoplasmic reticulum membrane. It carries out the reaction an alpha-D-Glc-(1-&gt;3)-alpha-D-Glc-(1-&gt;3)-alpha-D-Man-(1-&gt;2)-alpha-D-Man-(1-&gt;2)-alpha-D-Man-(1-&gt;3)-[alpha-D-Man-(1-&gt;2)-alpha-D-Man-(1-&gt;3)-[alpha-D-Man-(1-&gt;2)-alpha-D-Man-(1-&gt;6)]-alpha-D-Man-(1-&gt;6)]-beta-D-Man-(1-&gt;4)-beta-D-GlcNAc-(1-&gt;4)-alpha-D-GlcNAc-diphospho-di-trans,poly-cis-dolichol + a di-trans,poly-cis-dolichyl beta-D-glucosyl phosphate = a alpha-D-Glc-(1-&gt;2)-alpha-D-Glc-(1-&gt;3)-alpha-D-Glc-(1-&gt;3)-alpha-D-Man-(1-&gt;2)-alpha-D-Man-(1-&gt;2)-alpha-D-Man-(1-&gt;3)-[alpha-D-Man-(1-&gt;2)-alpha-D-Man-(1-&gt;3)-[alpha-D-Man-(1-&gt;2)-alpha-D-Man-(1-&gt;6)]-alpha-D-Man-(1-&gt;6)]-beta-D-Man-(1-&gt;4)-beta-D-GlcNAc-(1-&gt;4)-alpha-D-GlcNAc-diphospho-di-trans,poly-cis-dolichol + a di-trans,poly-cis-dolichyl phosphate + H(+). Its pathway is protein modification; protein glycosylation. Dol-P-Glc:Glc(2)Man(9)GlcNAc(2)-PP-Dol alpha-1,2-glucosyltransferase that operates in the biosynthetic pathway of dolichol-linked oligosaccharides, the glycan precursors employed in protein asparagine (N)-glycosylation. The assembly of dolichol-linked oligosaccharides begins on the cytosolic side of the endoplasmic reticulum membrane and finishes in its lumen. The sequential addition of sugars to dolichol pyrophosphate produces dolichol-linked oligosaccharides containing fourteen sugars, including two GlcNAcs, nine mannoses and three glucoses. Once assembled, the oligosaccharide is transferred from the lipid to nascent proteins by oligosaccharyltransferases. In the lumen of the endoplasmic reticulum, adds the third and last glucose residue from dolichyl phosphate glucose (Dol-P-Glc) onto the lipid-linked oligosaccharide intermediate Glc(2)Man(9)GlcNAc(2)-PP-Dol to produce Glc(3)Man(9)GlcNAc(2)-PP-Dol. This Mus musculus (Mouse) protein is Dol-P-Glc:Glc(2)Man(9)GlcNAc(2)-PP-Dol alpha-1,2-glucosyltransferase.